The sequence spans 442 residues: Histidine--tRNA ligase (442 aa).

This sequence belongs to the class-II aminoacyl-tRNA synthetase family. In terms of assembly, homodimer.

It localises to the cytoplasm. The enzyme catalyses tRNA(His) + L-histidine + ATP = L-histidyl-tRNA(His) + AMP + diphosphate + H(+). The sequence is that of Histidine--tRNA ligase from Helicobacter pylori (strain P12).